The following is a 292-amino-acid chain: Acetylglutamate kinase (292 aa).

Substrate contacts are provided by residues Gly-64–Gly-65, Arg-86, and Asn-190.

Belongs to the acetylglutamate kinase family. ArgB subfamily.

It is found in the cytoplasm. It carries out the reaction N-acetyl-L-glutamate + ATP = N-acetyl-L-glutamyl 5-phosphate + ADP. It functions in the pathway amino-acid biosynthesis; L-arginine biosynthesis; N(2)-acetyl-L-ornithine from L-glutamate: step 2/4. Functionally, catalyzes the ATP-dependent phosphorylation of N-acetyl-L-glutamate. This Geobacter metallireducens (strain ATCC 53774 / DSM 7210 / GS-15) protein is Acetylglutamate kinase.